The chain runs to 227 residues: Testis-expressed protein 30 (227 aa).

In Homo sapiens (Human), this protein is Testis-expressed protein 30 (TEX30).